Consider the following 1578-residue polypeptide: MASSAREHLLFVRRRNPQMRYTLSPENLQSLAAQNSMPENMALQRANSDTDLVTSESRSSLTASMYEYTLGQAQNLIIFWDIKEEVDPSDWIGLYHIDENSPANFWDSKNRGVTGTQKGQIVWRIEPGPYFMEPEIKICFKYYHGISGALRATTPCITVKNPAVMMGAEGMEGGASGSLHSRKLVSFTLSDLRAVGLKKGMFFNPDPYLKMSIQPGKKSSFPTCAHHGQERRSTIISNTTNPIWHREKYSFFALLTDVLEIEIKDKFAKSRPIIKRFLGKLTIPVQRLLERQAGDQMLSYNLGRRLPADHVSGYLQFKVEVTSSAHEDASPEAVGTILGVHTVNGDLGSPSDEEDMPGSHHDSTICANGPVSEDSVADGTPKHSFRTSSTLEIDTEDLISTSSRNSPPRGRQDSLNDYLDAIEHNGPARPGAASSSERSMGASPKLRSSFPTDTRLNAMLHIDSDEEDHEFQQDLGYPSSLEEEGGLIMCSRASRIDDGSLTSQTKPEDDNPVENEDASIHETASLEERLENLPEVADGSLPSSTAPDENEANLEPQPSADQGSTELCSSQEVDQPTSGADAGASDTSGGSRRAASETESLDQGSEPSQVSSETEPSDPARTESVSEASTRPEGESDPEGADSSCNESVTTQLSSVETRCSSLESARFPETPAFSSQEEEDGACAAEPTSSGPAEGSQESVCTPSSLPAVQVPSREEEGSAAEAAALSEQGELGEVWQRRGSLEGAAAAAPAAAATDSQPQEDGDAGDAQGACEGATAQEEGATGGSQTNGHQPLRSLPSVRQDVSRYQRVDEALPPNWEARIDSHGRIFYVDHVNRTTTWQRPTAPPAPQVLQRSNSIQQMEQLNRRYQSIRRTMTNERPEENTSAIDGAGEEADFHQASADFRRENVLPHSTSRSRLTLLLQSPPVKFLISPEFFTVLHSNPSAYRMFTNNTCLKHMITKVRRDTHHFERYQHNRDLVGFLNMFANKQLELPRGWEMKHDHQGKAFFVDHNSRTTTFIDPRLPLQSSRPTSALVHRQHLTRQRSHSAGEVGEDSRHAGPPVLPRPSSTFNTVSRPQYQDMVPVAYNDKIVAFLRQPNILEILQERQPDLARNHSLREKIQFIRTEGTPGLVRLSSDADLVMLLSLFEEEIMSYVPPHALLHPSYCQSPRGSPVSSPQNSPGTQRANARAPAPYKRDFEAKLRNFYRKLETKGYGQGPGKLKLIIRRDHLLEDAFNQIMGYSRKDLQRNKLYVTFVGEEGLDYSGPSREFFFLVSRELFNPYYGLFEYSANDTYTVQISPMSAFVDNHHEWFRFSGRILGLALIHQYLLDAFFTRPFYKALLRILCDLSDLEYLDEEFHQSLQWMKDNDIHDILDLTFTVNEEVFGQITERELKPGGANIPVTEKNKKEYIERMVKWRIERGVVQQTESLVRGFYEVVDARLVSVFDARELELVIAGTAEIDLNDWRNNTEYRGGYHDNHIVIRWFWAAVERFNNEQRLRLLQFVTGTSSIPYEGFASLRGSNGPRRFCVEKWGKITALPRAHTCFNRLDLPPYPSFSMLYEKLLTAVEETSTFGLE.

The residue at position 48 (serine 48) is a Phosphoserine. A C2 domain is found at 171 to 298 (MEGGASGSLH…LERQAGDQML (128 aa)). Disordered stretches follow at residues 341-453 (HTVN…FPTD) and 496-802 (IDDG…PSVR). The span at 386 to 406 (RTSSTLEIDTEDLISTSSRNS) shows a compositional bias: polar residues. The segment covering 518–532 (ASIHETASLEERLEN) has biased composition (basic and acidic residues). Over residues 559–576 (SADQGSTELCSSQEVDQP) the composition is skewed to polar residues. The span at 577-593 (TSGADAGASDTSGGSRR) shows a compositional bias: low complexity. Polar residues-rich tracts occupy residues 597–614 (ETES…SSET), 643–664 (SSCN…SSLE), and 688–708 (PTSS…SSLP). Low complexity-rich tracts occupy residues 721-735 (AAEA…ELGE), 746-755 (AAAAAPAAAA), and 769-782 (AQGA…QEEG). Positions 737–1074 (WQRRGSLEGA…PRPSSTFNTV (338 aa)) are interaction with TP73. Residues 813 to 846 (EALPPNWEARIDSHGRIFYVDHVNRTTTWQRPTA) enclose the WW 1 domain. Positions 853-880 (LQRSNSIQQMEQLNRRYQSIRRTMTNER) form a coiled coil. Phosphoserine is present on residues serine 858 and serine 915. Positions 991–1024 (LELPRGWEMKHDHQGKAFFVDHNSRTTTFIDPRL) constitute a WW 2 domain. Disordered stretches follow at residues 1030-1075 (RPTS…NTVS) and 1167-1193 (CQSP…RAPA). The segment covering 1037-1046 (HRQHLTRQRS) has biased composition (basic residues). The segment covering 1167–1187 (CQSPRGSPVSSPQNSPGTQRA) has biased composition (polar residues). At serine 1181 the chain carries Phosphoserine. One can recognise an HECT domain in the interval 1243-1578 (SRKDLQRNKL…VEETSTFGLE (336 aa)). Cysteine 1546 serves as the catalytic Glycyl thioester intermediate.

Interacts with TP73. Interacts with FZR1.

It is found in the cytoplasm. The protein resides in the cytoskeleton. Its subcellular location is the spindle. It carries out the reaction S-ubiquitinyl-[E2 ubiquitin-conjugating enzyme]-L-cysteine + [acceptor protein]-L-lysine = [E2 ubiquitin-conjugating enzyme]-L-cysteine + N(6)-ubiquitinyl-[acceptor protein]-L-lysine.. It participates in protein modification; protein ubiquitination. Its function is as follows. E3 ubiquitin-protein ligase that mediates ubiquitination of TP73. Acts to stabilize TP73 and enhance activation of transcription by TP73. Involved in the regulation of mitotic metaphase/anaphase transition. The protein is E3 ubiquitin-protein ligase HECW2 (Hecw2) of Mus musculus (Mouse).